The chain runs to 351 residues: Very-long-chain 3-oxoacyl-CoA reductase (351 aa).

A helical membrane pass occupies residues 26-46; sequence LLWCAFTVGAVKLTTFMLSLI. NADP(+) is bound by residues leucine 72, aspartate 126, asparagine 153, tyrosine 225, lysine 229, valine 258, and serine 260. Tyrosine 225 serves as the catalytic Proton donor. Residue lysine 229 is the Lowers pKa of active site Tyr of the active site.

The protein belongs to the short-chain dehydrogenases/reductases (SDR) family.

The protein localises to the endoplasmic reticulum membrane. The enzyme catalyses a very-long-chain (3R)-3-hydroxyacyl-CoA + NADP(+) = a very-long-chain 3-oxoacyl-CoA + NADPH + H(+). The protein operates within lipid metabolism; fatty acid biosynthesis. In terms of biological role, component of the microsomal membrane bound fatty acid elongation system, which produces the 26-carbon very long-chain fatty acids (VLCFA) from palmitate. Catalyzes the reduction of the 3-ketoacyl-CoA intermediate that is formed in each cycle of fatty acid elongation. VLCFAs serve as precursors for ceramide and sphingolipids. The chain is Very-long-chain 3-oxoacyl-CoA reductase from Eremothecium gossypii (strain ATCC 10895 / CBS 109.51 / FGSC 9923 / NRRL Y-1056) (Yeast).